The sequence spans 1040 residues: Multidrug resistance protein MdtB (1040 aa).

11 helical membrane passes run 15–37 (LFILRPVATTLLMIAILLAGIIG), 343–365 (VQFELLLAIALVVMVIYLFLRNA), 369–391 (LIPSIAVPLSLVGTFAAMYFLGF), 398–420 (LMALTIATGFVVDDAIVVIENIA), 440–462 (IGFTIISLTFSLIAVLIPLLFMG), 474–496 (VTLAVSILISAVVSLTLTPMMCA), 535–557 (HPWLTLSVALGTLLLTILLYIWI), 867–889 (VWLIVAAIVAMYIVLGVLYESFI), 909–931 (LMMAGKDLDVIAIIGIILLIGIV), 968–990 (ILMTTMAALLSALPLMLSTGVGA), and 1000–1022 (MVGGLIMSQILTLFTTPVIYLLF).

Belongs to the resistance-nodulation-cell division (RND) (TC 2.A.6) family. MdtB subfamily. As to quaternary structure, part of a tripartite efflux system composed of MdtA, MdtB and MdtC. MdtB forms a heteromultimer with MdtC.

It localises to the cell inner membrane. This chain is Multidrug resistance protein MdtB, found in Pectobacterium atrosepticum (strain SCRI 1043 / ATCC BAA-672) (Erwinia carotovora subsp. atroseptica).